The sequence spans 62 residues: Large ribosomal subunit protein bL32 (62 aa).

Belongs to the bacterial ribosomal protein bL32 family.

In Treponema denticola (strain ATCC 35405 / DSM 14222 / CIP 103919 / JCM 8153 / KCTC 15104), this protein is Large ribosomal subunit protein bL32.